We begin with the raw amino-acid sequence, 460 residues long: Bifunctional protein GlmU (460 aa).

A pyrophosphorylase region spans residues methionine 1–proline 233. UDP-N-acetyl-alpha-D-glucosamine contacts are provided by residues lysine 21, glutamine 76, and glycine 81–threonine 82. Aspartate 105 contacts Mg(2+). Glycine 140, glutamate 158, and asparagine 231 together coordinate UDP-N-acetyl-alpha-D-glucosamine. Asparagine 231 serves as a coordination point for Mg(2+). The tract at residues leucine 234–alanine 254 is linker. The N-acetyltransferase stretch occupies residues glycine 255 to arginine 460. UDP-N-acetyl-alpha-D-glucosamine-binding residues include arginine 337 and lysine 355. Histidine 367 acts as the Proton acceptor in catalysis. UDP-N-acetyl-alpha-D-glucosamine-binding residues include tyrosine 370 and asparagine 381. Residues alanine 384, asparagine 390 to tyrosine 391, serine 409, glycine 427, and arginine 444 each bind acetyl-CoA.

The protein in the N-terminal section; belongs to the N-acetylglucosamine-1-phosphate uridyltransferase family. In the C-terminal section; belongs to the transferase hexapeptide repeat family. Homotrimer. It depends on Mg(2+) as a cofactor.

It localises to the cytoplasm. The catalysed reaction is alpha-D-glucosamine 1-phosphate + acetyl-CoA = N-acetyl-alpha-D-glucosamine 1-phosphate + CoA + H(+). It catalyses the reaction N-acetyl-alpha-D-glucosamine 1-phosphate + UTP + H(+) = UDP-N-acetyl-alpha-D-glucosamine + diphosphate. The protein operates within nucleotide-sugar biosynthesis; UDP-N-acetyl-alpha-D-glucosamine biosynthesis; N-acetyl-alpha-D-glucosamine 1-phosphate from alpha-D-glucosamine 6-phosphate (route II): step 2/2. It functions in the pathway nucleotide-sugar biosynthesis; UDP-N-acetyl-alpha-D-glucosamine biosynthesis; UDP-N-acetyl-alpha-D-glucosamine from N-acetyl-alpha-D-glucosamine 1-phosphate: step 1/1. It participates in bacterial outer membrane biogenesis; LPS lipid A biosynthesis. Catalyzes the last two sequential reactions in the de novo biosynthetic pathway for UDP-N-acetylglucosamine (UDP-GlcNAc). The C-terminal domain catalyzes the transfer of acetyl group from acetyl coenzyme A to glucosamine-1-phosphate (GlcN-1-P) to produce N-acetylglucosamine-1-phosphate (GlcNAc-1-P), which is converted into UDP-GlcNAc by the transfer of uridine 5-monophosphate (from uridine 5-triphosphate), a reaction catalyzed by the N-terminal domain. The protein is Bifunctional protein GlmU of Methylibium petroleiphilum (strain ATCC BAA-1232 / LMG 22953 / PM1).